A 138-amino-acid chain; its full sequence is Nucleoside diphosphate kinase (138 aa).

Positions 12, 60, 88, 94, 105, and 115 each coordinate ATP. Histidine 118 serves as the catalytic Pros-phosphohistidine intermediate.

Belongs to the NDK family. As to quaternary structure, homotetramer. The cofactor is Mg(2+).

Its subcellular location is the cytoplasm. The catalysed reaction is a 2'-deoxyribonucleoside 5'-diphosphate + ATP = a 2'-deoxyribonucleoside 5'-triphosphate + ADP. It carries out the reaction a ribonucleoside 5'-diphosphate + ATP = a ribonucleoside 5'-triphosphate + ADP. Major role in the synthesis of nucleoside triphosphates other than ATP. The ATP gamma phosphate is transferred to the NDP beta phosphate via a ping-pong mechanism, using a phosphorylated active-site intermediate. The protein is Nucleoside diphosphate kinase of Cutibacterium acnes (strain DSM 16379 / KPA171202) (Propionibacterium acnes).